Here is a 317-residue protein sequence, read N- to C-terminus: Transaldolase (317 aa).

Lys-132 (schiff-base intermediate with substrate) is an active-site residue.

This sequence belongs to the transaldolase family. Type 1 subfamily. Homodimer.

The protein localises to the cytoplasm. The enzyme catalyses D-sedoheptulose 7-phosphate + D-glyceraldehyde 3-phosphate = D-erythrose 4-phosphate + beta-D-fructose 6-phosphate. It participates in carbohydrate degradation; pentose phosphate pathway; D-glyceraldehyde 3-phosphate and beta-D-fructose 6-phosphate from D-ribose 5-phosphate and D-xylulose 5-phosphate (non-oxidative stage): step 2/3. Its function is as follows. Transaldolase is important for the balance of metabolites in the pentose-phosphate pathway. The protein is Transaldolase (talB) of Escherichia coli O104:H4 (strain 2009EL-2071).